The following is a 218-amino-acid chain: 3,4-dihydroxy-2-butanone 4-phosphate synthase (218 aa).

Residues 38–39, Asp-43, 151–155, and Glu-175 contribute to the D-ribulose 5-phosphate site; these read RE and RRGHT. Residue Glu-39 participates in Mg(2+) binding. A Mg(2+)-binding site is contributed by His-154.

Belongs to the DHBP synthase family. In terms of assembly, homodimer. Mg(2+) is required as a cofactor. Mn(2+) serves as cofactor.

It carries out the reaction D-ribulose 5-phosphate = (2S)-2-hydroxy-3-oxobutyl phosphate + formate + H(+). It functions in the pathway cofactor biosynthesis; riboflavin biosynthesis; 2-hydroxy-3-oxobutyl phosphate from D-ribulose 5-phosphate: step 1/1. Catalyzes the conversion of D-ribulose 5-phosphate to formate and 3,4-dihydroxy-2-butanone 4-phosphate. The protein is 3,4-dihydroxy-2-butanone 4-phosphate synthase of Vibrio vulnificus (strain CMCP6).